We begin with the raw amino-acid sequence, 223 residues long: MKGMRGRLFVMTGASGVGKGTVRAKVLERTRLFYSISMTTRPPRPGEVDGVDYYFVDRPTFEALVREDGFLEYAEYVGHLYGTPRAPVERALSRGEDVLLEIEVQGALQVKRAVPEAVLIFLLPPSLSELKRRLVYRGKDSPEKIQKRLEQAEWEIRNAHLFDYVVVNDVLEEAVADFLAILTAERRRSGRMGEALEMALRRDLALEAELDEILRRRYGGTGH.

Residues 6–183 form the Guanylate kinase-like domain; that stretch reads GRLFVMTGAS…AVADFLAILT (178 aa). 13-20 is a binding site for ATP; it reads GASGVGKG.

The protein belongs to the guanylate kinase family.

The protein localises to the cytoplasm. It carries out the reaction GMP + ATP = GDP + ADP. In terms of biological role, essential for recycling GMP and indirectly, cGMP. This Thermus thermophilus (strain ATCC 27634 / DSM 579 / HB8) protein is Guanylate kinase.